A 1242-amino-acid chain; its full sequence is Insulin receptor substrate 1 (1242 aa).

S3 carries the phosphoserine modification. A mediates interaction with PHIP region spans residues 3–137 (SPPESDGFSD…GAGGGGGSCS (135 aa)). One can recognise a PH domain in the interval 12–115 (DVRKVGYLRK…WYQALLQLHN (104 aa)). S99 is modified (phosphoserine; by CK2). Positions 160–264 (FKEVWQVILK…EAMRAMSDEF (105 aa)) constitute an IRS-type PTB domain. A disordered region spans residues 262–430 (DEFRPRSKSQ…SDGGFISSDE (169 aa)). The segment covering 269-281 (KSQSSSNCSNPIS) has biased composition (low complexity). Residues S270 and S307 each carry the phosphoserine; by RPS6KB1 modification. S312 is modified (phosphoserine; by IKKB, MAPK8 and RPS6KB1). S315, S323, S330, S345, and S348 each carry phosphoserine. Residues 354–363 (THAHRHRGSA) are compositionally biased toward basic residues. Composition is skewed to low complexity over residues 383-404 (SPSA…GSTS) and 412-424 (SSAS…SDGG). Position 419 is a phosphoserine (S419). A phosphothreonine mark is found at T446 and T453. A Phosphotyrosine; by INSR modification is found at Y465. The YXXM motif 1 signature appears at 465 to 468 (YICM). Position 527 is a phosphoserine; by RPS6KB1 (S527). Positions 551–554 (YTEM) match the YXXM motif 2 motif. Residues 592–610 (LERRGGHHRPDSSTLHTDD) show a composition bias toward basic and acidic residues. A disordered region spans residues 592–616 (LERRGGHHRPDSSTLHTDDGYMPMS). Y612 is subject to Phosphotyrosine; by INSR. The YXXM motif 3 signature appears at 612-615 (YMPM). Residues S616 and S629 each carry the phosphoserine modification. At Y632 the chain carries Phosphotyrosine; by INSR. Positions 632-635 (YMPM) match the YXXM motif 4 motif. At S636 the chain carries Phosphoserine; by RPS6KB1. Phosphotyrosine is present on Y662. The YXXM motif 5 motif lies at 662–665 (YMMM). Residues 668-693 (SGGCSPDIGGGPSSSSSSSNAVPSGT) form a disordered region. The YXXM motif 6 signature appears at 732 to 735 (YMNM). Disordered regions lie at residues 771–900 (FKHT…VNIE) and 918–937 (SPSV…EETG). Residues 776–785 (RPGEPEEGAR) are compositionally biased toward basic and acidic residues. S794 is modified (phosphoserine; by AMPK and SIK2). Residues 801–815 (AATADDSSSSTSSDS) show a composition bias toward low complexity. S892 carries the post-translational modification Phosphoserine. At Y896 the chain carries Phosphotyrosine; by INSR. The interval 896–898 (YVN) is GRB2-binding. A compositionally biased stretch (polar residues) spans 918 to 928 (SPSVRCPSQLQ). Y941 and Y989 each carry phosphotyrosine; by INSR. 3 short sequence motifs (YXXM motif) span residues 941–944 (YMKM), 989–992 (YMTM), and 1012–1015 (YADM). Positions 1057–1146 (SSLLGGPQGP…DVKRHSSASF (90 aa)) are disordered. The span at 1073-1085 (TRVNLSPNRNQSA) shows a compositional bias: polar residues. At S1100 the chain carries Phosphoserine. At S1101 the chain carries Phosphoserine; by RPS6KB1 and PKC/PRKCQ. Residues 1102–1114 (ETFSSTPSATRVG) are compositionally biased toward polar residues. Residue Y1179 is modified to Phosphotyrosine; by INSR. Residues K1186 and K1189 each participate in a glycyl lysine isopeptide (Lys-Gly) (interchain with G-Cter in ubiquitin) cross-link. Positions 1190-1242 (QCPQECTPEPQPPPPPPPHQPLGSGESSSTRRSSEDLSAYASISFQKQPEDRQ) are disordered. Pro residues predominate over residues 1198–1209 (EPQPPPPPPPHQ). A compositionally biased stretch (low complexity) spans 1210–1220 (PLGSGESSSTR). Residue Y1229 is modified to Phosphotyrosine; by INSR.

As to quaternary structure, interacts with UBTF and PIK3CA. Interacts (via phosphorylated YXXM motifs) with PIK3R1. Interacts with ROCK1 and FER. Interacts (via PH domain) with PHIP. Interacts with GRB2. Interacts with SOCS7. Interacts (via IRS-type PTB domain) with IGF1R and INSR (via the tyrosine-phosphorylated NPXY motif). Interacts with ALK. Interacts with EIF2AK2/PKR. Interacts with GKAP1. Interacts with DGKZ in the absence of insulin; insulin stimulation decreases this interaction. Found in a ternary complex with DGKZ and PIP5K1A in the absence of insulin stimulation. Interacts with SQSTM1; the interaction is disrupted by the presence of tensin TNS2. Interacts with NCK1 (via SH2 domain). Interacts with NCK2 (via SH3 domain). Interacts with SH2B1; this interaction enhances leptin-induced activation of the PI3-kinase pathway. Interacts with DVL2; this interaction promotes the Wnt/beta-catenin signaling pathway. Serine phosphorylation of IRS1 is a mechanism for insulin resistance. Ser-307, Ser-312, Ser-315, and Ser-323 phosphorylations inhibit insulin action through disruption of IRS1 interaction with the insulin receptor INSR. Phosphorylation of Tyr-896 is required for GRB2-binding. Phosphorylated by ALK. Phosphorylated at Ser-270, Ser-307, Ser-636 and Ser-1101 by RPS6KB1; phosphorylation induces accelerated degradation of IRS1. Phosphorylated on tyrosine residues in response to insulin. In skeletal muscles, dephosphorylated on Tyr-612 by TNS2 under anabolic conditions; dephosphorylation results in the proteasomal degradation of IRS1. In terms of processing, ubiquitinated by the Cul7-RING(FBXW8) complex in a mTOR-dependent manner, leading to its degradation: the Cul7-RING(FBXW8) complex recognizes and binds IRS1 previously phosphorylated by S6 kinase (RPS6KB1 or RPS6KB2). Ubiquitinated by TRAF4 through 'Lys-29' linkage; this ubiquitination regulates the interaction of IRS1 with IGFR and IRS1 tyrosine phosphorylation upon IGF1 stimulation. Post-translationally, S-nitrosylation at by BLVRB inhibits its activity.

It is found in the cytoplasm. The protein localises to the nucleus. Its function is as follows. Signaling adapter protein that participates in the signal transduction from two prominent receptor tyrosine kinases, insulin receptor/INSR and insulin-like growth factor I receptor/IGF1R. Plays therefore an important role in development, growth, glucose homeostasis as well as lipid metabolism. Upon phosphorylation by the insulin receptor, functions as a signaling scaffold that propagates insulin action through binding to SH2 domain-containing proteins including the p85 regulatory subunit of PI3K, NCK1, NCK2, GRB2 or SHP2. Recruitment of GRB2 leads to the activation of the guanine nucleotide exchange factor SOS1 which in turn triggers the Ras/Raf/MEK/MAPK signaling cascade. Activation of the PI3K/AKT pathway is responsible for most of insulin metabolic effects in the cell, and the Ras/Raf/MEK/MAPK is involved in the regulation of gene expression and in cooperation with the PI3K pathway regulates cell growth and differentiation. Acts a positive regulator of the Wnt/beta-catenin signaling pathway through suppression of DVL2 autophagy-mediated degradation leading to cell proliferation. In Homo sapiens (Human), this protein is Insulin receptor substrate 1 (IRS1).